The following is a 128-amino-acid chain: Lysozyme C-1 (128 aa).

Residues 1 to 128 (KVYDRCEFAR…VSQYIRGCKL (128 aa)) form the C-type lysozyme domain. 4 cysteine pairs are disulfide-bonded: Cys-6–Cys-126, Cys-30–Cys-114, Cys-63–Cys-79, and Cys-75–Cys-93. Active-site residues include Glu-35 and Asp-51.

Belongs to the glycosyl hydrolase 22 family. Monomer.

It is found in the secreted. It carries out the reaction Hydrolysis of (1-&gt;4)-beta-linkages between N-acetylmuramic acid and N-acetyl-D-glucosamine residues in a peptidoglycan and between N-acetyl-D-glucosamine residues in chitodextrins.. Lysozymes have primarily a bacteriolytic function; those in tissues and body fluids are associated with the monocyte-macrophage system and enhance the activity of immunoagents. The protein is Lysozyme C-1 of Sus scrofa (Pig).